We begin with the raw amino-acid sequence, 800 residues long: Putative antiporter subunit mnhA2 (800 aa).

The next 20 helical transmembrane spans lie at 1 to 21, 33 to 53, 78 to 98, 118 to 138, 167 to 187, 207 to 227, 241 to 261, 273 to 293, 300 to 320, 331 to 351, 387 to 407, 424 to 444, 472 to 492, 527 to 547, 595 to 615, 627 to 647, 651 to 671, 676 to 696, 712 to 732, and 768 to 788; these read MSLV…LLMS, IALV…PSVA, GLSL…FFYA, LFMF…MYIF, FMIT…LYIM, GLFI…SAQF, TPVS…FLLL, YIYI…ITAL, GILA…VGIG, IASI…NHAI, LVMT…GFLS, FSLI…IFTF, PWLF…IFFV, GFNI…VLAI, IIMT…RIGL, GALE…LIFI, LTMV…FIAM, LALT…VSFS, IIKI…IFIT, and LDTL…YTLL.

The protein belongs to the CPA3 antiporters (TC 2.A.63) subunit A family. May form a heterooligomeric complex that consists of seven subunits: mnhA2, mnhB2, mnhC2, mnhD2, mnhE2, mnhF2 and mnhG2.

It is found in the cell membrane. In Staphylococcus aureus (strain Mu3 / ATCC 700698), this protein is Putative antiporter subunit mnhA2 (mnhA2).